The following is a 256-amino-acid chain: Imidazole glycerol phosphate synthase subunit HisF (256 aa).

Residues Asp11 and Asp130 contribute to the active site.

Belongs to the HisA/HisF family. Heterodimer of HisH and HisF.

It localises to the cytoplasm. It catalyses the reaction 5-[(5-phospho-1-deoxy-D-ribulos-1-ylimino)methylamino]-1-(5-phospho-beta-D-ribosyl)imidazole-4-carboxamide + L-glutamine = D-erythro-1-(imidazol-4-yl)glycerol 3-phosphate + 5-amino-1-(5-phospho-beta-D-ribosyl)imidazole-4-carboxamide + L-glutamate + H(+). The protein operates within amino-acid biosynthesis; L-histidine biosynthesis; L-histidine from 5-phospho-alpha-D-ribose 1-diphosphate: step 5/9. IGPS catalyzes the conversion of PRFAR and glutamine to IGP, AICAR and glutamate. The HisF subunit catalyzes the cyclization activity that produces IGP and AICAR from PRFAR using the ammonia provided by the HisH subunit. In Prochlorococcus marinus (strain MIT 9312), this protein is Imidazole glycerol phosphate synthase subunit HisF.